The sequence spans 188 residues: Succinate dehydrogenase [ubiquinone] cytochrome b large subunit, mitochondrial (188 aa).

Residues methionine 1–valine 31 constitute a mitochondrion transit peptide. At serine 32–tryptophan 69 the chain is on the mitochondrial matrix side. Residues methionine 70–valine 95 traverse the membrane as a helical segment. Positions 72 and 76 each coordinate a rhodoquinol. Residues serine 72 and arginine 76 each coordinate a ubiquinone. The Mitochondrial intermembrane portion of the chain corresponds to leucine 96–proline 113. A helical transmembrane segment spans residues tryptophan 114–glycine 140. Histidine 131 lines the heme b pocket. Topologically, residues phenylalanine 141–tyrosine 153 are mitochondrial matrix. Residues arginine 154 to tryptophan 176 form a helical membrane-spanning segment. Over glutamate 177–histidine 188 the chain is Mitochondrial intermembrane.

It belongs to the cytochrome b558 family. In terms of assembly, component of the mitochondrial electron transport chain complex II composed of four subunits: a flavoprotein (Fp), an iron-sulfur protein (Ip), and a large cytochrome b (CybL) subunit and a small cytochrome b (CybS) subunit. There are 2 developmental stage-specific forms of complex II which have the Ip and CybL subunits in common. Complex II from the free-living larvae (aerobic environment) acts as a succinate dehydrogenase and is composed of the common subunit Ip and CybL and the stage specific subunits FpL and CybSL. Complex II from parasitic larvae and adults (anaerobic environment) acts as a fumarate reductase and is composed of the common subunit Ip and CybL and the stage specific subunits FpA and CybSA. Heme b is required as a cofactor. Expressed in adult muscles (at protein level).

It is found in the mitochondrion inner membrane. It functions in the pathway carbohydrate metabolism; tricarboxylic acid cycle; fumarate from succinate (eukaryal route): step 1/1. Its function is as follows. Membrane-bound large subunit (CybL) of the mitochondrial electron transport chain complex II, which together with the membrane-bound small subunit (CybS), anchor the catalytic subunits to the inner mitochondria membrane. During the free-living egg-larvae stages, which occur in an aerobic environment, complex II acts as a succinate dehydrogenase by transferring electrons from succinate to ubiquinone. During the parasitic larvae and adult stages, which occur in an anaerobic environment, complex II acts as a fumarate reductase by transferring electrons from rhodoquinol to fumarate. The sequence is that of Succinate dehydrogenase [ubiquinone] cytochrome b large subunit, mitochondrial from Ascaris suum (Pig roundworm).